Here is a 164-residue protein sequence, read N- to C-terminus: Phosphopantetheine adenylyltransferase (164 aa).

S9 serves as a coordination point for substrate. Residues S9–F10 and H17 contribute to the ATP site. Residues K41, L73, and K87 each coordinate substrate. Residues G88–R90, E98, and H123–S129 contribute to the ATP site.

The protein belongs to the bacterial CoaD family. Homohexamer. The cofactor is Mg(2+).

It localises to the cytoplasm. The catalysed reaction is (R)-4'-phosphopantetheine + ATP + H(+) = 3'-dephospho-CoA + diphosphate. Its pathway is cofactor biosynthesis; coenzyme A biosynthesis; CoA from (R)-pantothenate: step 4/5. Its function is as follows. Reversibly transfers an adenylyl group from ATP to 4'-phosphopantetheine, yielding dephospho-CoA (dPCoA) and pyrophosphate. The chain is Phosphopantetheine adenylyltransferase from Rubrobacter xylanophilus (strain DSM 9941 / JCM 11954 / NBRC 16129 / PRD-1).